A 279-amino-acid chain; its full sequence is Phycobilisome 34.5 kDa linker polypeptide, phycoerythrocyanin-associated, rod (279 aa).

The PBS-linker domain maps to 2-178 (STSVAERLAI…LYRGRANSDN (177 aa)). The 53-residue stretch at 226–278 (ARMFIVEAIAGTLNTNVAVRRSRQVYTVPYDRLSATYQEIHKRGGKIVKITPA) folds into the CpcD-like domain.

This sequence belongs to the phycobilisome linker protein family.

The protein localises to the cellular thylakoid membrane. Rod linker protein, associated with phycoerythrocyanin. Linker polypeptides determine the state of aggregation and the location of the disk-shaped phycobiliprotein units within the phycobilisome and modulate their spectroscopic properties in order to mediate a directed and optimal energy transfer. This is Phycobilisome 34.5 kDa linker polypeptide, phycoerythrocyanin-associated, rod (pecC) from Mastigocladus laminosus (Fischerella sp.).